Here is a 496-residue protein sequence, read N- to C-terminus: Glycerol kinase (496 aa).

Thr-12 contributes to the ADP binding site. Positions 12, 13, and 14 each coordinate ATP. Sn-glycerol 3-phosphate is bound at residue Thr-12. Arg-16 contributes to the ADP binding site. Sn-glycerol 3-phosphate is bound by residues Arg-82, Glu-83, and Tyr-134. Arg-82, Glu-83, and Tyr-134 together coordinate glycerol. Residue His-230 is modified to Phosphohistidine; by HPr. Asp-244 provides a ligand contact to sn-glycerol 3-phosphate. Glycerol-binding residues include Asp-244 and Gln-245. ADP-binding residues include Thr-266 and Gly-309. Thr-266, Gly-309, Gln-313, and Gly-410 together coordinate ATP. Residues Gly-410 and Asn-414 each contribute to the ADP site.

The protein belongs to the FGGY kinase family. As to quaternary structure, homotetramer and homodimer (in equilibrium). In terms of processing, the phosphoenolpyruvate-dependent sugar phosphotransferase system (PTS), including enzyme I, and histidine-containing protein (HPr) are required for the phosphorylation, which leads to the activation of the enzyme.

It carries out the reaction glycerol + ATP = sn-glycerol 3-phosphate + ADP + H(+). The protein operates within polyol metabolism; glycerol degradation via glycerol kinase pathway; sn-glycerol 3-phosphate from glycerol: step 1/1. Its activity is regulated as follows. Activated by phosphorylation and inhibited by fructose 1,6-bisphosphate (FBP). Functionally, key enzyme in the regulation of glycerol uptake and metabolism. Catalyzes the phosphorylation of glycerol to yield sn-glycerol 3-phosphate. This Bacillus velezensis (strain DSM 23117 / BGSC 10A6 / LMG 26770 / FZB42) (Bacillus amyloliquefaciens subsp. plantarum) protein is Glycerol kinase.